We begin with the raw amino-acid sequence, 465 residues long: Cysteine--tRNA ligase (465 aa).

Position 28 (Cys-28) interacts with Zn(2+). Residues 30-40 carry the 'HIGH' region motif; it reads PTVYNYIHIGN. Zn(2+) contacts are provided by Cys-208, His-233, and Glu-237. A 'KMSKS' region motif is present at residues 265 to 269; that stretch reads KMSKS. Lys-268 is a binding site for ATP.

Belongs to the class-I aminoacyl-tRNA synthetase family. In terms of assembly, monomer. The cofactor is Zn(2+).

Its subcellular location is the cytoplasm. The enzyme catalyses tRNA(Cys) + L-cysteine + ATP = L-cysteinyl-tRNA(Cys) + AMP + diphosphate. This Exiguobacterium sibiricum (strain DSM 17290 / CCUG 55495 / CIP 109462 / JCM 13490 / 255-15) protein is Cysteine--tRNA ligase.